A 339-amino-acid chain; its full sequence is DnaJ homolog subfamily C member 22 (339 aa).

In terms of domain architecture, TM2 spans 4 to 50 (GLLMTYVLWALGGPVGLHHLYLGRDSHALLWMLTLGGGGLGWLWEFW). A run of 7 helical transmembrane segments spans residues 5–25 (LLMTYVLWALGGPVGLHHLYL), 30–50 (HALLWMLTLGGGGLGWLWEFW), 81–101 (FASQIVVGVYFGLVALVSLSS), 105–125 (FYIVGLPLAVGLGVLLVAAVG), 135–155 (LGAAFLTSPVFYGRPIAILPI), 185–205 (VGLAYLAFTGPLAYSTMYNTA), and 218–238 (FLSWFSFFPLLGRLVESVLLL). The J domain occupies 277-339 (LAHQVLGVPE…LSQPKKPRAS (63 aa)).

Its subcellular location is the membrane. May function as a co-chaperone. The sequence is that of DnaJ homolog subfamily C member 22 (Dnajc22) from Mus musculus (Mouse).